The primary structure comprises 1812 residues: Protein virilizer homolog (1812 aa).

At alanine 2 the chain carries N-acetylalanine. 2 disordered regions span residues 132-302 and 576-596; these read ISHD…EQIS and KTSS…GLER. A phosphoserine mark is found at serine 133 and serine 138. Pro residues predominate over residues 139-152; the sequence is PPPPPPPPPPPQPQ. A compositionally biased stretch (basic and acidic residues) spans 160 to 169; it reads KHADGEKEDQ. Serine 173 bears the Phosphoserine mark. The segment covering 174-190 has biased composition (pro residues); sequence PPRPQPRGPRTPPGPPP. Threonine 184 carries the post-translational modification Phosphothreonine. Position 222 is a phosphoserine (serine 222). A compositionally biased stretch (polar residues) spans 224–233; that stretch reads DRNSVPQEGQ. Acidic residues-rich tracts occupy residues 234 to 266 and 274 to 302; these read YSDE…EDED and IPEE…EQIS. Residues 584–596 are compositionally biased toward basic and acidic residues; the sequence is SEPDHDTDAGLER. Tyrosine 914 bears the Phosphotyrosine mark. The residue at position 1579 (serine 1579) is a Phosphoserine. 2 disordered regions span residues 1616–1635 and 1663–1812; these read HVVP…GIRP and KEVV…SFTR. Positions 1689–1698 are enriched in gly residues; sequence GFSGNRGGRG. Threonine 1708 is modified (phosphothreonine). Arginine 1723 is modified (omega-N-methylarginine). The segment covering 1723 to 1748 has biased composition (polar residues); it reads RGSSWSAQNTPRGNYNESRGGQSNFN. The residue at position 1741 (arginine 1741) is an Asymmetric dimethylarginine; alternate. An Omega-N-methylarginine; alternate modification is found at arginine 1741. Arginine 1773, arginine 1775, and arginine 1793 each carry asymmetric dimethylarginine. Gly residues predominate over residues 1788 to 1802; that stretch reads GSGGSRGKFVSGGSG. The segment covering 1803 to 1812 has biased composition (basic residues); sequence RGRHVRSFTR.

Belongs to the vir family. In terms of assembly, component of the WMM complex, a N6-methyltransferase complex composed of a catalytic subcomplex, named MAC, and of an associated subcomplex, named MACOM. The MAC subcomplex is composed of METTL3 and METTL14. The MACOM subcomplex is composed of WTAP, ZC3H13, CBLL1/HAKAI, VIRMA, and, in some cases of RBM15 (RBM15 or RBM15B). Interacts with WTAP. Also a component of a MACOM-like complex, named WTAP complex, composed of WTAP, ZC3H13, CBLL1, VIRMA, RBM15, BCLAF1 and THRAP3. Interacts with NUDT21 and CPSF6.

It localises to the nucleus speckle. The protein resides in the nucleus. It is found in the nucleoplasm. The protein localises to the cytoplasm. Functionally, associated component of the WMM complex, a complex that mediates N6-methyladenosine (m6A) methylation of RNAs, a modification that plays a role in the efficiency of mRNA splicing and RNA processing. Acts as a key regulator of m6A methylation by promoting m6A methylation of mRNAs in the 3'-UTR near the stop codon: recruits the catalytic core components METTL3 and METTL14, thereby guiding m6A methylation at specific sites. Required for mRNA polyadenylation via its role in selective m6A methylation: m6A methylation of mRNAs in the 3'-UTR near the stop codon correlating with alternative polyadenylation (APA). The sequence is that of Protein virilizer homolog from Homo sapiens (Human).